Consider the following 591-residue polypeptide: Ferric-chelate reductase 1 (591 aa).

The helical transmembrane segment at 6-26 threads the bilayer; it reads FTVSAFILLLHVSFVANYPSG. Residues 13–179 form the Reelin domain; the sequence is LLLHVSFVAN…FTTPEATIAP (167 aa). N-linked (GlcNAc...) asparagine glycans are attached at residues Asn-50, Asn-85, Asn-308, Asn-321, and Asn-353. Residues 216-331 form the DOMON domain; that stretch reads ERACVLLSFT…ASYYIFVADG (116 aa). One can recognise a Cytochrome b561 domain in the interval 335–533; sequence DGRIHKHSQQ…VGTEIILEIH (199 aa). A helical transmembrane segment spans residues 372–392; the sequence is VHGALMFVAWMTTVSVGVLIA. Residues His-373 and His-413 each contribute to the heme b site. The next 2 membrane-spanning stretches (helical) occupy residues 416 to 436 and 445 to 465; these read LMLTTSALTFIAFLLPFIYRG and HPYLGFIVMVLAVLQLLLAAF. Residues His-445 and His-481 each coordinate heme b. The next 3 membrane-spanning stretches (helical) occupy residues 490-510, 514-534, and 568-588; these read IIAVAAMFLGMDLPGLNLPGP, YAMIGFVAWHVGTEIILEIHA, and VVLAIYVCGNLTFLTMFLSAI.

It belongs to the FRRS1 family. Heme b is required as a cofactor.

It is found in the membrane. Functionally, ferric-chelate reductases reduce Fe(3+) to Fe(2+) before its transport from the endosome to the cytoplasm. This chain is Ferric-chelate reductase 1 (FRRS1), found in Bos taurus (Bovine).